A 637-amino-acid polypeptide reads, in one-letter code: SCF-associated factor 1 (637 aa).

An F-box domain is found at 14 to 63 (GLSPDIVQATLPFLSSDDIKNLSQTNKYYNTLLDFDHSKILWHELFHKAF). Serine 16 carries the phosphoserine modification. The RCC1 1 repeat unit spans residues 109 to 202 (AKFYSWGYLK…GFSFQILTES (94 aa)). A disordered region spans residues 242 to 315 (YPRITSRSNG…RTTMPSMGPH (74 aa)). Positions 244–260 (RITSRSNGSTVNTTGTF) are enriched in polar residues. The residue at position 266 (serine 266) is a Phosphoserine. A compositionally biased stretch (low complexity) spans 289 to 305 (SGGAPAASPGGSHSGVP). An RCC1 2 repeat occupies 565 to 635 (GHLYSWGIES…GWQTGALIIK (71 aa)).

As to quaternary structure, interacts with AAH1, SKP1 and CDC53. Component of the SCF(SAF1) complex containing CDC53, SKP1, HRT1 and SAF1.

It functions in the pathway protein modification; protein ubiquitination. In terms of biological role, substrate recognition component of a SCF (SKP1-CUL1-F-box protein) E3 ubiquitin-protein ligase complex which mediates the ubiquitination and subsequent proteasomal degradation of target proteins. Targets AAH1 adenine deaminase for proteasome-dependent degradation upon entry into quiescence. Targets also URA7. The polypeptide is SCF-associated factor 1 (SAF1) (Saccharomyces cerevisiae (strain ATCC 204508 / S288c) (Baker's yeast)).